A 255-amino-acid chain; its full sequence is Putative ankyrin repeat protein R880 (255 aa).

5 ANK repeats span residues 79-109 (SGINNYLLTACKYGHCKLVKYFVECGADIHY), 110-139 (KTDYALQLACKYGYLEIVKYLVKKGANINT), 141-169 (DCYAVQLASREGHLKIVKYLVELGTNVRK), 171-199 (RDLAFRWSVENNHLSVTKYLVELGSDVRS), and 201-229 (KNYAIKKSCEYGYFEMTQYLMNQGANFRV).

This Acanthamoeba polyphaga (Amoeba) protein is Putative ankyrin repeat protein R880.